The chain runs to 692 residues: Elongation factor G (692 aa).

In terms of domain architecture, tr-type G spans 8 to 282 (EKVRNIGIAA…AVVDYLPAPS (275 aa)). GTP is bound by residues 17–24 (AHIDAGKT), 81–85 (DTPGH), and 135–138 (NKMD).

The protein belongs to the TRAFAC class translation factor GTPase superfamily. Classic translation factor GTPase family. EF-G/EF-2 subfamily.

It localises to the cytoplasm. Its function is as follows. Catalyzes the GTP-dependent ribosomal translocation step during translation elongation. During this step, the ribosome changes from the pre-translocational (PRE) to the post-translocational (POST) state as the newly formed A-site-bound peptidyl-tRNA and P-site-bound deacylated tRNA move to the P and E sites, respectively. Catalyzes the coordinated movement of the two tRNA molecules, the mRNA and conformational changes in the ribosome. This Nostoc punctiforme (strain ATCC 29133 / PCC 73102) protein is Elongation factor G.